Consider the following 808-residue polypeptide: Digalactosyldiacylglycerol synthase 1, chloroplastic (808 aa).

The tract at residues 1-23 is disordered; it reads MVKETLIPPSSTSMTTGTSSSSS. The N-terminal 58 residues, 1–58, are a transit peptide targeting the chloroplast; the sequence is MVKETLIPPSSTSMTTGTSSSSSLSMTLSSTNALSFLSKGWREVWDSADADLQLMRDR. Positions 10–23 are enriched in low complexity; that stretch reads SSTSMTTGTSSSSS.

It belongs to the glycosyltransferase group 1 family. Glycosyltransferase 4 subfamily.

It localises to the plastid. The protein resides in the chloroplast outer membrane. The catalysed reaction is a 1,2-diacyl-3-O-(beta-D-galactosyl)-sn-glycerol + UDP-alpha-D-galactose = a 1,2-diacyl-3-O-[alpha-D-galactosyl-(1-&gt;6)-beta-D-galactosyl]-sn-glycerol + UDP + H(+). Its function is as follows. Involved in the synthesis of diacylglycerol galactolipids that are specifically found in thylakoid membranes. Specific for alpha-glycosidic linkages. Responsible for the final assembly of galactolipids in photosynthetic membranes. Digalactosyldiacylglycerol (DGDG) provides stability to the photosystem I (PSI) complex, especially to the PsaA, PsaB, PsaC, PsaL and PsaH subunits. The protein is Digalactosyldiacylglycerol synthase 1, chloroplastic of Arabidopsis thaliana (Mouse-ear cress).